A 419-amino-acid polypeptide reads, in one-letter code: Serine--tRNA ligase (419 aa).

The interval 45 to 66 is disordered; the sequence is ADSLRAEQKAASKSVGGASPEE. 226-228 contributes to the L-serine binding site; sequence TSE. Residues 257 to 259 and Val-273 contribute to the ATP site; that span reads RRE. Residue Glu-280 participates in L-serine binding. 344-347 contacts ATP; sequence ELTS. An L-serine-binding site is contributed by Thr-379.

This sequence belongs to the class-II aminoacyl-tRNA synthetase family. Type-1 seryl-tRNA synthetase subfamily. Homodimer. The tRNA molecule binds across the dimer.

It localises to the cytoplasm. It carries out the reaction tRNA(Ser) + L-serine + ATP = L-seryl-tRNA(Ser) + AMP + diphosphate + H(+). It catalyses the reaction tRNA(Sec) + L-serine + ATP = L-seryl-tRNA(Sec) + AMP + diphosphate + H(+). It participates in aminoacyl-tRNA biosynthesis; selenocysteinyl-tRNA(Sec) biosynthesis; L-seryl-tRNA(Sec) from L-serine and tRNA(Sec): step 1/1. Its function is as follows. Catalyzes the attachment of serine to tRNA(Ser). Is also able to aminoacylate tRNA(Sec) with serine, to form the misacylated tRNA L-seryl-tRNA(Sec), which will be further converted into selenocysteinyl-tRNA(Sec). The polypeptide is Serine--tRNA ligase (Mycobacterium ulcerans (strain Agy99)).